We begin with the raw amino-acid sequence, 237 residues long: Ribonuclease 3 (237 aa).

The region spanning 4 to 130 (IQILFQTLNI…LFGAIYLDLG (127 aa)) is the RNase III domain. Glutamate 45 serves as a coordination point for Mg(2+). Aspartate 49 is an active-site residue. Mg(2+)-binding residues include aspartate 116 and glutamate 119. Glutamate 119 is a catalytic residue. The 69-residue stretch at 154-222 (DFKTQLQEIV…AQQALSKVAK (69 aa)) folds into the DRBM domain.

It belongs to the ribonuclease III family. Homodimer. It depends on Mg(2+) as a cofactor.

It is found in the cytoplasm. It catalyses the reaction Endonucleolytic cleavage to 5'-phosphomonoester.. Its function is as follows. Digests double-stranded RNA. Involved in the processing of primary rRNA transcript to yield the immediate precursors to the large and small rRNAs (23S and 16S). Processes some mRNAs, and tRNAs when they are encoded in the rRNA operon. Processes pre-crRNA and tracrRNA of type II CRISPR loci if present in the organism. This is Ribonuclease 3 from Aster yellows witches'-broom phytoplasma (strain AYWB).